A 502-amino-acid chain; its full sequence is Zinc finger C3HC-type protein 1 (502 aa).

Ala2 is subject to N-acetylalanine. Ser24 carries the phosphoserine modification. Thr28 is subject to Phosphothreonine. The interval Leu35–Ser74 is disordered. Positions Gln50–Ser72 are enriched in polar residues. Phosphoserine is present on residues Ser58 and Ser62. Thr84 carries the phosphothreonine modification. The segment at Cys102 to Cys156 adopts a C3HC-type zinc-finger fold. Residues Ser302–Ser423 form a disordered region. Phosphoserine is present on residues Ser321 and Ser329. Residue Thr333 is modified to Phosphothreonine. Residues Ser338, Ser344, Ser354, Ser359, and Ser370 each carry the phosphoserine modification. Polar residues predominate over residues Arg351–Pro360. The span at Pro371–Arg380 shows a compositional bias: low complexity. Residue Ser381 is modified to Phosphoserine. At Thr384 the chain carries Phosphothreonine. Ser395 is subject to Phosphoserine. Positions Pro396–Arg402 match the Nuclear localization signal motif. Ser407 and Ser483 each carry phosphoserine. Positions Ser407 to Thr422 are enriched in low complexity.

Interacts with TPR; this interaction mediates ZC3HC1 nuclear envelopes (NE)-association but also required for proper positioning of a substantial amount of TPR at the nuclear basket (NB). Phosphorylated. May also be weakly phosphorylated on Tyr residues.

It localises to the nucleus. The protein resides in the nucleus envelope. Required for proper positioning of a substantial amount of TPR at the nuclear basket (NB) through interaction with TPR. The polypeptide is Zinc finger C3HC-type protein 1 (ZC3HC1) (Pongo abelii (Sumatran orangutan)).